Here is a 509-residue protein sequence, read N- to C-terminus: Maturase K (509 aa).

The protein belongs to the intron maturase 2 family. MatK subfamily.

The protein localises to the plastid. Its subcellular location is the chloroplast. In terms of biological role, usually encoded in the trnK tRNA gene intron. Probably assists in splicing its own and other chloroplast group II introns. This chain is Maturase K, found in Pereskia aculeata (Barbados gooseberry).